The chain runs to 253 residues: Tryptophan synthase alpha chain (253 aa).

Residues Glu47 and Asp58 each act as proton acceptor in the active site.

The protein belongs to the TrpA family. Tetramer of two alpha and two beta chains.

The enzyme catalyses (1S,2R)-1-C-(indol-3-yl)glycerol 3-phosphate + L-serine = D-glyceraldehyde 3-phosphate + L-tryptophan + H2O. Its pathway is amino-acid biosynthesis; L-tryptophan biosynthesis; L-tryptophan from chorismate: step 5/5. In terms of biological role, the alpha subunit is responsible for the aldol cleavage of indoleglycerol phosphate to indole and glyceraldehyde 3-phosphate. This Lactococcus lactis subsp. lactis (strain IL1403) (Streptococcus lactis) protein is Tryptophan synthase alpha chain.